The sequence spans 529 residues: Type I restriction enzyme StySJI methylase subunit (529 aa).

S-adenosyl-L-methionine is bound by residues 148 to 153 (QYFTPR), 178 to 180 (TAG), and glutamate 216. The interval 405–444 (YGEDPHGLSPREEGEWSFNAEESEVADSEENKNTDQHQAT) is disordered. A compositionally biased stretch (basic and acidic residues) spans 407 to 418 (EDPHGLSPREEG).

This sequence belongs to the N(4)/N(6)-methyltransferase family. In terms of assembly, the type I restriction/modification system is composed of three polypeptides R, M and S; the restriction enzyme has stoichiometry R(2)M(2)S(1) while the methyltransferase is M(2)S(1).

It carries out the reaction a 2'-deoxyadenosine in DNA + S-adenosyl-L-methionine = an N(6)-methyl-2'-deoxyadenosine in DNA + S-adenosyl-L-homocysteine + H(+). The subtype gamma methyltransferase (M) subunit of a type I restriction enzyme. The M and S subunits together form a methyltransferase (MTase) that methylates two adenine residues of the sequence 5'-GAGN(6)GTRC-3'. In the presence of the R subunit the complex can also act as an endonuclease, binding to the same target sequence but cutting the DNA some distance from this site. Whether the DNA is cut or modified depends on the methylation state of the target sequence. When the target site is unmodified, the DNA is cut. When the target site is hemimethylated, the complex acts as a maintenance MTase modifying the DNA so that both strands become methylated. After locating a non-methylated recognition site, the enzyme complex serves as a molecular motor that translocates DNA in an ATP-dependent manner until a collision occurs that triggers cleavage. The chain is Type I restriction enzyme StySJI methylase subunit from Salmonella typhimurium (strain LT2 / SGSC1412 / ATCC 700720).